A 613-amino-acid polypeptide reads, in one-letter code: V-type proton ATPase catalytic subunit A isoform 2 (613 aa).

Residue 240–247 participates in ATP binding; sequence GAFGCGKT.

The protein belongs to the ATPase alpha/beta chains family. In terms of assembly, V-ATPase is a heteromultimeric enzyme composed of a peripheral catalytic V1 complex (main components: subunits A, B, C, D, E, and F) attached to an integral membrane V0 proton pore complex (main component: the proteolipid protein).

It catalyses the reaction ATP + H2O + 4 H(+)(in) = ADP + phosphate + 5 H(+)(out). Functionally, catalytic subunit of the peripheral V1 complex of vacuolar ATPase. V-ATPase vacuolar ATPase is responsible for acidifying a variety of intracellular compartments in eukaryotic cells. This chain is V-type proton ATPase catalytic subunit A isoform 2, found in Acetabularia acetabulum (Mermaid's wine glass).